A 707-amino-acid chain; its full sequence is Elongation factor G (707 aa).

Residues 8 to 296 (ERYRNFGIMA…AVVDFLPAPT (289 aa)) enclose the tr-type G domain. Residues 17-24 (AHIDAGKT), 94-98 (DTPGH), and 148-151 (NKMD) contribute to the GTP site.

Belongs to the TRAFAC class translation factor GTPase superfamily. Classic translation factor GTPase family. EF-G/EF-2 subfamily.

Its subcellular location is the cytoplasm. Functionally, catalyzes the GTP-dependent ribosomal translocation step during translation elongation. During this step, the ribosome changes from the pre-translocational (PRE) to the post-translocational (POST) state as the newly formed A-site-bound peptidyl-tRNA and P-site-bound deacylated tRNA move to the P and E sites, respectively. Catalyzes the coordinated movement of the two tRNA molecules, the mRNA and conformational changes in the ribosome. This chain is Elongation factor G, found in Paracoccus denitrificans (strain Pd 1222).